Here is a 220-residue protein sequence, read N- to C-terminus: Ras-related protein Rab-11B (220 aa).

18-25 contacts GTP; that stretch reads GDSGVGKS. An Effector region motif is present at residues 40 to 48; it reads KLSTIGVEF. GTP is bound by residues 66–70 and 124–127; these read DTAGQ and NKSD. Residues Cys-219 and Cys-220 are each lipidated (S-geranylgeranyl cysteine).

This sequence belongs to the small GTPase superfamily. Rab family.

The protein resides in the cell membrane. This is Ras-related protein Rab-11B (rab11B) from Dictyostelium discoideum (Social amoeba).